Reading from the N-terminus, the 78-residue chain is Large ribosomal subunit protein bL28 (78 aa).

It belongs to the bacterial ribosomal protein bL28 family.

The polypeptide is Large ribosomal subunit protein bL28 (Corynebacterium aurimucosum (strain ATCC 700975 / DSM 44827 / CIP 107346 / CN-1) (Corynebacterium nigricans)).